A 421-amino-acid polypeptide reads, in one-letter code: Serine--tRNA ligase (421 aa).

229-231 (TSE) lines the L-serine pocket. ATP-binding positions include 260 to 262 (RKE) and valine 276. Glutamate 283 is a binding site for L-serine. Residue 347–350 (EIVS) participates in ATP binding. Threonine 383 lines the L-serine pocket.

It belongs to the class-II aminoacyl-tRNA synthetase family. Type-1 seryl-tRNA synthetase subfamily. In terms of assembly, homodimer. The tRNA molecule binds across the dimer.

Its subcellular location is the cytoplasm. The catalysed reaction is tRNA(Ser) + L-serine + ATP = L-seryl-tRNA(Ser) + AMP + diphosphate + H(+). The enzyme catalyses tRNA(Sec) + L-serine + ATP = L-seryl-tRNA(Sec) + AMP + diphosphate + H(+). The protein operates within aminoacyl-tRNA biosynthesis; selenocysteinyl-tRNA(Sec) biosynthesis; L-seryl-tRNA(Sec) from L-serine and tRNA(Sec): step 1/1. Functionally, catalyzes the attachment of serine to tRNA(Ser). Is also able to aminoacylate tRNA(Sec) with serine, to form the misacylated tRNA L-seryl-tRNA(Sec), which will be further converted into selenocysteinyl-tRNA(Sec). This Nitrosopumilus maritimus (strain SCM1) protein is Serine--tRNA ligase.